A 201-amino-acid polypeptide reads, in one-letter code: Recombination protein RecR (201 aa).

Residues 60–75 form a C4-type zinc finger; sequence CSVCGNVDTTDPCSIC. In terms of domain architecture, Toprim spans 83–178; that stretch reads TTIIVVEDVA…KITRLAHGVP (96 aa).

This sequence belongs to the RecR family.

May play a role in DNA repair. It seems to be involved in an RecBC-independent recombinational process of DNA repair. It may act with RecF and RecO. The protein is Recombination protein RecR of Bartonella quintana (strain Toulouse) (Rochalimaea quintana).